Here is a 151-residue protein sequence, read N- to C-terminus: MRVWIDADACPRAAKDQVIKFALKRKFEVLLVAGQSQVKPAFACVRLIVVPSGPDAADDYLVEHAEPGDLVICSDVPLADRLVKKGVAALDPRGRGFDERNMGERLAVRNLFTDLRDQGQVGGGQAAYGERDRQTFANALDRLLTRLSRSQ.

It belongs to the UPF0178 family.

The chain is UPF0178 protein PST_0536 from Stutzerimonas stutzeri (strain A1501) (Pseudomonas stutzeri).